The following is a 97-amino-acid chain: uncharacterized protein (97 aa).

The segment at 58 to 97 is disordered; the sequence is SLLLPRTVQTGGTEREKPGPGQRKRGAHCSACKRSSTRPS.

This is an uncharacterized protein from Homo sapiens (Human).